The following is a 176-amino-acid chain: Ribosome maturation factor RimM (176 aa).

Residues 101 to 170 (EGEYFESDLI…RITVELPEGL (70 aa)) form the PRC barrel domain.

This sequence belongs to the RimM family. As to quaternary structure, binds ribosomal protein uS19.

Its subcellular location is the cytoplasm. An accessory protein needed during the final step in the assembly of 30S ribosomal subunit, possibly for assembly of the head region. Essential for efficient processing of 16S rRNA. May be needed both before and after RbfA during the maturation of 16S rRNA. It has affinity for free ribosomal 30S subunits but not for 70S ribosomes. The chain is Ribosome maturation factor RimM from Solibacter usitatus (strain Ellin6076).